A 374-amino-acid chain; its full sequence is N5-carboxyaminoimidazole ribonucleotide synthase (374 aa).

Residues Arg108, Lys148, 153 to 159 (GYDGKGQ), 183 to 186 (EKYL), Glu191, His214, and 266 to 267 (NE) contribute to the ATP site. The 185-residue stretch at 112–296 (KETLKSAGTK…QFDTHILAVT (185 aa)) folds into the ATP-grasp domain.

This sequence belongs to the PurK/PurT family. Homodimer.

It carries out the reaction 5-amino-1-(5-phospho-beta-D-ribosyl)imidazole + hydrogencarbonate + ATP = 5-carboxyamino-1-(5-phospho-D-ribosyl)imidazole + ADP + phosphate + 2 H(+). It functions in the pathway purine metabolism; IMP biosynthesis via de novo pathway; 5-amino-1-(5-phospho-D-ribosyl)imidazole-4-carboxylate from 5-amino-1-(5-phospho-D-ribosyl)imidazole (N5-CAIR route): step 1/2. Functionally, catalyzes the ATP-dependent conversion of 5-aminoimidazole ribonucleotide (AIR) and HCO(3)(-) to N5-carboxyaminoimidazole ribonucleotide (N5-CAIR). In Staphylococcus aureus (strain Mu50 / ATCC 700699), this protein is N5-carboxyaminoimidazole ribonucleotide synthase.